The chain runs to 124 residues: Fluoride-specific ion channel FluC (124 aa).

4 consecutive transmembrane segments (helical) span residues 4–24 (VLFV…ISLL), 35–55 (FGTL…FALG), 62–82 (PEIK…FSTF), and 95–115 (LVKA…VVYL). Na(+) contacts are provided by Gly74 and Thr77.

The protein belongs to the fluoride channel Fluc/FEX (TC 1.A.43) family.

Its subcellular location is the cell inner membrane. It carries out the reaction fluoride(in) = fluoride(out). Na(+) is not transported, but it plays an essential structural role and its presence is essential for fluoride channel function. In terms of biological role, fluoride-specific ion channel. Important for reducing fluoride concentration in the cell, thus reducing its toxicity. This Shewanella halifaxensis (strain HAW-EB4) protein is Fluoride-specific ion channel FluC.